The sequence spans 81 residues: Cytotoxin 4N (81 aa).

The N-terminal stretch at 1–21 (MKTLLLTLVVVTIVCLDLGYT) is a signal peptide. Intrachain disulfides connect C24-C42, C35-C59, C63-C74, and C75-C80.

Belongs to the three-finger toxin family. Short-chain subfamily. Type IA cytotoxin sub-subfamily. In terms of assembly, monomer in solution; Homodimer and oligomer in the presence of negatively charged lipids forming a pore with a size ranging between 20 and 30 Angstroms. In terms of tissue distribution, expressed by the venom gland.

It is found in the secreted. It localises to the target cell membrane. Functionally, shows cytolytic activity on many different cells by forming pore in lipid membranes. In vivo, increases heart rate or kills the animal by cardiac arrest. In addition, it binds to heparin with high affinity, interacts with Kv channel-interacting protein 1 (KCNIP1) in a calcium-independent manner, and binds to integrin alpha-V/beta-3 (ITGAV/ITGB3) with moderate affinity. The polypeptide is Cytotoxin 4N (Naja atra (Chinese cobra)).